Consider the following 292-residue polypeptide: GTP cyclohydrolase FolE2 (292 aa).

This sequence belongs to the GTP cyclohydrolase IV family.

The enzyme catalyses GTP + H2O = 7,8-dihydroneopterin 3'-triphosphate + formate + H(+). It functions in the pathway cofactor biosynthesis; 7,8-dihydroneopterin triphosphate biosynthesis; 7,8-dihydroneopterin triphosphate from GTP: step 1/1. In terms of biological role, converts GTP to 7,8-dihydroneopterin triphosphate. The chain is GTP cyclohydrolase FolE2 from Staphylococcus epidermidis (strain ATCC 35984 / DSM 28319 / BCRC 17069 / CCUG 31568 / BM 3577 / RP62A).